The following is a 577-amino-acid chain: Acyl-coenzyme A synthetase ACSM1, mitochondrial (577 aa).

Residues 1-31 (MQWLMRFRTLWGIHKSFHNIHPAPSQLRCRS) constitute a mitochondrion transit peptide. The residue at position 85 (K85) is an N6-succinyllysine. K146 carries the N6-acetyllysine; alternate modification. The residue at position 146 (K146) is an N6-succinyllysine; alternate. K183 bears the N6-succinyllysine mark. K204 carries the post-translational modification N6-acetyllysine; alternate. At K204 the chain carries N6-succinyllysine; alternate. Residue K214 is modified to N6-acetyllysine. 226-234 (TSGTTGFPK) provides a ligand contact to ATP. K237 carries the post-translational modification N6-succinyllysine. Residues K356 and K391 each carry the N6-acetyllysine; alternate modification. K356 and K391 each carry N6-succinyllysine; alternate. ATP-binding residues include D452 and R467. The residue at position 531 (K531) is an N6-acetyllysine. An N6-acetyllysine; alternate modification is found at K538. At K538 the chain carries N6-succinyllysine; alternate. K549 is subject to N6-acetyllysine. ATP is bound at residue K563.

This sequence belongs to the ATP-dependent AMP-binding enzyme family. As to quaternary structure, monomer. Requires Mg(2+) as cofactor. Mn(2+) is required as a cofactor.

The protein resides in the mitochondrion matrix. Its subcellular location is the mitochondrion. The enzyme catalyses a medium-chain fatty acid + ATP + CoA = a medium-chain fatty acyl-CoA + AMP + diphosphate. The catalysed reaction is benzoate + ATP + CoA = benzoyl-CoA + AMP + diphosphate. It catalyses the reaction (R)-lipoate + GTP + H(+) = (R)-lipoyl-GMP + diphosphate. It carries out the reaction octanoate + ATP + CoA = octanoyl-CoA + AMP + diphosphate. The enzyme catalyses decanoate + ATP + CoA = decanoyl-CoA + AMP + diphosphate. The catalysed reaction is dodecanoate + ATP + CoA = dodecanoyl-CoA + AMP + diphosphate. It catalyses the reaction tetradecanoate + ATP + CoA = tetradecanoyl-CoA + AMP + diphosphate. It carries out the reaction hexanoate + ATP + CoA = hexanoyl-CoA + AMP + diphosphate. The enzyme catalyses butanoate + ATP + CoA = butanoyl-CoA + AMP + diphosphate. The catalysed reaction is hexadecanoate + ATP + CoA = hexadecanoyl-CoA + AMP + diphosphate. With respect to regulation, activated by monovalent cations, such as potassium, rubidium or ammonium. Functionally, catalyzes the activation of fatty acids by CoA to produce an acyl-CoA, the first step in fatty acid metabolism. Capable of activating medium-chain fatty acids (e.g. butyric (C4) to decanoic (C10) acids), and certain carboxylate-containing xenobiotics, e.g. benzoate. Also catalyzes the activation of lipoate to lipoyl-nucleoside monophosphate. Activates lipoate with GTP at a 1000-fold higher rate than with ATP and activates both (R)- and (S)-lipoate to the respective lipoyl-GMP, with a preference for (R)-lipoate. This Homo sapiens (Human) protein is Acyl-coenzyme A synthetase ACSM1, mitochondrial (ACSM1).